We begin with the raw amino-acid sequence, 91 residues long: Proline, histidine and glycine-rich protein 1 (91 aa).

Residues 1 to 91 are disordered; it reads MHPGGKGHCG…HCGPHPGPHH (91 aa). 3 stretches are compositionally biased toward gly residues: residues 33–42, 49–63, and 70–82; these read HPGHGPGHCP, GHGG…GHCP, and GHGG…GPGH.

This is Proline, histidine and glycine-rich protein 1 (Phgr1) from Mus musculus (Mouse).